We begin with the raw amino-acid sequence, 205 residues long: Thiamine-phosphate synthase (205 aa).

Residues 37–41 and N69 contribute to the 4-amino-2-methyl-5-(diphosphooxymethyl)pyrimidine site; that span reads QVREK. Mg(2+)-binding residues include D70 and D89. S108 is a binding site for 4-amino-2-methyl-5-(diphosphooxymethyl)pyrimidine. 134 to 136 lines the 2-[(2R,5Z)-2-carboxy-4-methylthiazol-5(2H)-ylidene]ethyl phosphate pocket; sequence TGS. Residue K137 participates in 4-amino-2-methyl-5-(diphosphooxymethyl)pyrimidine binding. Residues G165 and 185–186 each bind 2-[(2R,5Z)-2-carboxy-4-methylthiazol-5(2H)-ylidene]ethyl phosphate; that span reads IS.

Belongs to the thiamine-phosphate synthase family. Requires Mg(2+) as cofactor.

It carries out the reaction 2-[(2R,5Z)-2-carboxy-4-methylthiazol-5(2H)-ylidene]ethyl phosphate + 4-amino-2-methyl-5-(diphosphooxymethyl)pyrimidine + 2 H(+) = thiamine phosphate + CO2 + diphosphate. The catalysed reaction is 2-(2-carboxy-4-methylthiazol-5-yl)ethyl phosphate + 4-amino-2-methyl-5-(diphosphooxymethyl)pyrimidine + 2 H(+) = thiamine phosphate + CO2 + diphosphate. The enzyme catalyses 4-methyl-5-(2-phosphooxyethyl)-thiazole + 4-amino-2-methyl-5-(diphosphooxymethyl)pyrimidine + H(+) = thiamine phosphate + diphosphate. The protein operates within cofactor biosynthesis; thiamine diphosphate biosynthesis; thiamine phosphate from 4-amino-2-methyl-5-diphosphomethylpyrimidine and 4-methyl-5-(2-phosphoethyl)-thiazole: step 1/1. Functionally, condenses 4-methyl-5-(beta-hydroxyethyl)thiazole monophosphate (THZ-P) and 2-methyl-4-amino-5-hydroxymethyl pyrimidine pyrophosphate (HMP-PP) to form thiamine monophosphate (TMP). The chain is Thiamine-phosphate synthase from Clostridium botulinum (strain Kyoto / Type A2).